The following is a 251-amino-acid chain: Triosephosphate isomerase (251 aa).

A substrate-binding site is contributed by 9–11 (NWK). Histidine 94 serves as the catalytic Electrophile. Residue glutamate 166 is the Proton acceptor of the active site. Substrate is bound by residues glycine 172, serine 211, and 232–233 (GG).

It belongs to the triosephosphate isomerase family. As to quaternary structure, homodimer.

It localises to the cytoplasm. It catalyses the reaction D-glyceraldehyde 3-phosphate = dihydroxyacetone phosphate. Its pathway is carbohydrate biosynthesis; gluconeogenesis. It participates in carbohydrate degradation; glycolysis; D-glyceraldehyde 3-phosphate from glycerone phosphate: step 1/1. Functionally, involved in the gluconeogenesis. Catalyzes stereospecifically the conversion of dihydroxyacetone phosphate (DHAP) to D-glyceraldehyde-3-phosphate (G3P). The polypeptide is Triosephosphate isomerase (Xanthomonas oryzae pv. oryzae (strain MAFF 311018)).